The sequence spans 188 residues: Translation machinery-associated protein 22 (188 aa).

The 72-residue stretch at 96 to 167 folds into the SUI1 domain; that stretch reads VVIKRIERSK…GVEELITQML (72 aa).

It belongs to the DENR family. In terms of assembly, interacts with the 40S ribosomal subunit.

It is found in the cytoplasm. The protein is Translation machinery-associated protein 22 (TMA22) of Yarrowia lipolytica (strain CLIB 122 / E 150) (Yeast).